We begin with the raw amino-acid sequence, 79 residues long: Probable [Fe-S]-dependent transcriptional repressor (79 aa).

Iron-sulfur cluster contacts are provided by C54, C59, C62, and C68.

It belongs to the FeoC family.

May function as a transcriptional regulator that controls feoABC expression. The sequence is that of Probable [Fe-S]-dependent transcriptional repressor from Photorhabdus laumondii subsp. laumondii (strain DSM 15139 / CIP 105565 / TT01) (Photorhabdus luminescens subsp. laumondii).